Reading from the N-terminus, the 291-residue chain is MIRRRLIIAAAAATALAACASGISNAPAPAPQPATTGSHAPGKTEVLWLGQAATRITTPGGKVIVIDPWLTGNPKTPPAFKQLSALGKVDMILLTHAHGDHLGDAPAIATTQHVPIWNGGGMGPQLVSLGLVTSDLVQPFGKSGTVMPFGPNGPKITAVHAEHSSELVWKNPATNKNESHYGGEPVGYIIEMENGFKIWHMGDTGLFSDMKLIAERYKPDLAMIPIGGHYTMGPQDAAIAVRDFIKPRYAIPMHYGTSPMLRGTPDEFKAALGAGATTAVIVPDPGQQVAF.

Belongs to the UPF0173 family.

The chain is UPF0173 metal-dependent hydrolase Rmet_5695 from Cupriavidus metallidurans (strain ATCC 43123 / DSM 2839 / NBRC 102507 / CH34) (Ralstonia metallidurans).